Here is a 199-residue protein sequence, read N- to C-terminus: Translation initiation factor IF-3 (199 aa).

The protein belongs to the IF-3 family. Monomer.

Its subcellular location is the cytoplasm. Its function is as follows. IF-3 binds to the 30S ribosomal subunit and shifts the equilibrium between 70S ribosomes and their 50S and 30S subunits in favor of the free subunits, thus enhancing the availability of 30S subunits on which protein synthesis initiation begins. This Mycoplasmopsis pulmonis (strain UAB CTIP) (Mycoplasma pulmonis) protein is Translation initiation factor IF-3.